The chain runs to 2313 residues: Protein Ycf2 (2313 aa).

Position 1606 to 1613 (glycine 1606 to serine 1613) interacts with ATP.

It belongs to the Ycf2 family.

It is found in the plastid. Its subcellular location is the chloroplast stroma. Its function is as follows. Probable ATPase of unknown function. Its presence in a non-photosynthetic plant (Epifagus virginiana) and experiments in tobacco indicate that it has an essential function which is probably not related to photosynthesis. The chain is Protein Ycf2 from Psilotum nudum (Whisk fern).